A 194-amino-acid chain; its full sequence is Phosphoheptose isomerase (194 aa).

One can recognise an SIS domain in the interval 37–194 (IANSFKQGGK…LIEFEMAKTA (158 aa)). 52 to 54 (NGG) contributes to the substrate binding site. The Zn(2+) site is built by His61 and Glu65. Substrate-binding positions include Glu65, 93–94 (ND), 119–121 (STS), Ser124, and Gln172. 2 residues coordinate Zn(2+): Gln172 and His180.

It belongs to the SIS family. GmhA subfamily. In terms of assembly, homotetramer. Zn(2+) serves as cofactor.

It is found in the cytoplasm. The enzyme catalyses 2 D-sedoheptulose 7-phosphate = D-glycero-alpha-D-manno-heptose 7-phosphate + D-glycero-beta-D-manno-heptose 7-phosphate. Its pathway is carbohydrate biosynthesis; D-glycero-D-manno-heptose 7-phosphate biosynthesis; D-glycero-alpha-D-manno-heptose 7-phosphate and D-glycero-beta-D-manno-heptose 7-phosphate from sedoheptulose 7-phosphate: step 1/1. It functions in the pathway bacterial outer membrane biogenesis; LOS core biosynthesis. Functionally, catalyzes the isomerization of sedoheptulose 7-phosphate in D-glycero-D-manno-heptose 7-phosphate. The sequence is that of Phosphoheptose isomerase from Haemophilus ducreyi (strain 35000HP / ATCC 700724).